A 537-amino-acid polypeptide reads, in one-letter code: Eukaryotic translation initiation factor 3 subunit L (537 aa).

The 213-residue stretch at 300–512 (TFSSILLYIQ…IHIADTKVSH (213 aa)) folds into the PCI domain.

Belongs to the eIF-3 subunit L family. Component of the eukaryotic translation initiation factor 3 (eIF-3) complex.

The protein resides in the cytoplasm. Its function is as follows. Component of the eukaryotic translation initiation factor 3 (eIF-3) complex, which is involved in protein synthesis of a specialized repertoire of mRNAs and, together with other initiation factors, stimulates binding of mRNA and methionyl-tRNAi to the 40S ribosome. The eIF-3 complex specifically targets and initiates translation of a subset of mRNAs involved in cell proliferation. This chain is Eukaryotic translation initiation factor 3 subunit L, found in Culex quinquefasciatus (Southern house mosquito).